A 434-amino-acid chain; its full sequence is D-amino acid dehydrogenase (434 aa).

3–17 (VLVLGSGVIGTASAY) provides a ligand contact to FAD.

It belongs to the DadA oxidoreductase family. FAD is required as a cofactor.

The catalysed reaction is a D-alpha-amino acid + A + H2O = a 2-oxocarboxylate + AH2 + NH4(+). The protein operates within amino-acid degradation; D-alanine degradation; NH(3) and pyruvate from D-alanine: step 1/1. Oxidative deamination of D-amino acids. The chain is D-amino acid dehydrogenase from Pseudomonas entomophila (strain L48).